We begin with the raw amino-acid sequence, 213 residues long: Probable transaldolase (213 aa).

The active-site Schiff-base intermediate with substrate is the lysine 83.

The protein belongs to the transaldolase family. Type 3B subfamily.

The protein localises to the cytoplasm. It carries out the reaction D-sedoheptulose 7-phosphate + D-glyceraldehyde 3-phosphate = D-erythrose 4-phosphate + beta-D-fructose 6-phosphate. It functions in the pathway carbohydrate degradation; pentose phosphate pathway; D-glyceraldehyde 3-phosphate and beta-D-fructose 6-phosphate from D-ribose 5-phosphate and D-xylulose 5-phosphate (non-oxidative stage): step 2/3. In terms of biological role, transaldolase is important for the balance of metabolites in the pentose-phosphate pathway. This chain is Probable transaldolase, found in Oceanobacillus iheyensis (strain DSM 14371 / CIP 107618 / JCM 11309 / KCTC 3954 / HTE831).